Reading from the N-terminus, the 847-residue chain is Protein IRS1 (847 aa).

3 disordered regions span residues 1–82 (MAQR…NFWH), 607–627 (WLMEQPPPPSRQTKPDAATMP), and 715–847 (QVIP…HVHH). Over residues 16-25 (RGRGAGGPSG) the composition is skewed to gly residues. Low complexity predominate over residues 26 to 56 (VGSSPPSSCVPMGATSTAGTGASAAPTATPG). Residues 723–733 (EPEDDDEDPTY) are compositionally biased toward acidic residues. A compositionally biased stretch (basic residues) spans 833–847 (RPKKCQTHAPHHVHH).

It belongs to the herpesviridae US22 family. As to quaternary structure, interacts (via N-terminus) with the viral DNA polymerase accessory subunit UL44. Interacts (via C-terminus) with host EIF2AK2.

Its subcellular location is the virion. The protein localises to the host cytoplasm. It localises to the host nucleus. Acts as a transactivator along with IE2, and is required for oriLyt-dependent DNA replication in the transient transfection replication assay using native promoters. The protein is Protein IRS1 (IRS1) of Human cytomegalovirus (strain Merlin) (HHV-5).